A 352-amino-acid polypeptide reads, in one-letter code: B1 bradykinin receptor (352 aa).

Over 1–41 the chain is Extracellular; it reads MAAQTLLELQPSNQSQLSALNTTSCDNAREAWDLLYQVLPI. 2 N-linked (GlcNAc...) asparagine glycosylation sites follow: asparagine 13 and asparagine 21. The chain crosses the membrane as a helical span at residues 42–62; it reads FILTICAFGLLGNLFVLSVFL. At 63-72 the chain is on the cytoplasmic side; it reads LLRRRLTVAE. The chain crosses the membrane as a helical span at residues 73 to 93; sequence IYLVNLAASDLVFVLGLPFWA. The Extracellular portion of the chain corresponds to 94-110; the sequence is QNIWNQFNWPFGDLLCR. An intrachain disulfide couples cysteine 109 to cysteine 188. The helical transmembrane segment at 111 to 131 threads the bilayer; sequence VVNGVIKANLFISIFLMVAIS. At 132–153 the chain is on the cytoplasmic side; the sequence is QDRYCVLVHPMASRRRRRRRRA. The chain crosses the membrane as a helical span at residues 154–174; it reads RATCMVIWAVGALLSTPTFLL. Topologically, residues 175 to 206 are extracellular; sequence RSVSAVQDLNISACILLLPHQAWHVARIVELN. Asparagine 184 is a glycosylation site (N-linked (GlcNAc...) asparagine). The chain crosses the membrane as a helical span at residues 207-227; sequence VLGFLLPLAAIIFFNGHILAS. At 228–250 the chain is on the cytoplasmic side; it reads LRGQGEVSQTRIGGPKDCKTTVL. A helical transmembrane segment spans residues 251-271; sequence ILTLVAAFLVCWAPYHCFAFL. Over 272 to 294 the chain is Extracellular; the sequence is EFLFQVRAVRGCFWEDFIDLGLQ. The helical transmembrane segment at 295 to 315 threads the bilayer; sequence LANFFAFTNSCLNPVIYVFVG. Residues 316–326 are Cytoplasmic-facing; it reads RLFRTKVWELY. The S-palmitoyl cysteine moiety is linked to residue cysteine 329.

The protein belongs to the G-protein coupled receptor 1 family. Bradykinin receptor subfamily. BDKRB1 sub-subfamily.

It is found in the cell membrane. In terms of biological role, this is a receptor for bradykinin. Could be a factor in chronic pain and inflammation. The sequence is that of B1 bradykinin receptor (BDKRB1) from Tupaia minor (Pigmy tree shrew).